Consider the following 566-residue polypeptide: 3-oxosteroid 1-dehydrogenase (566 aa).

Position 10 to 39 (10 to 39 (DVVVVGSGAAGMVAALVAAHRGLSTVVVEK)) interacts with FAD.

The protein belongs to the FAD-dependent oxidoreductase 2 family. 3-oxosteroid dehydrogenase subfamily. It depends on FAD as a cofactor.

The catalysed reaction is a 3-oxosteroid + A = a 3-oxo-Delta(1)-steroid + AH2. It catalyses the reaction a 3-oxo-Delta(4)-steroid + A = a 3-oxo-Delta(1,4)-steroid + AH2. Functionally, involved in the degradation of cholesterol. Catalyzes the elimination of the C-1 and C-2 hydrogen atoms of the A-ring from the polycyclic ring structure of 3-ketosteroids. Is also involved in the formation of 3-keto-1,4-diene-steroid from 3-keto-4-ene-steroid. This Mycobacterium tuberculosis (strain CDC 1551 / Oshkosh) protein is 3-oxosteroid 1-dehydrogenase (kstD).